Consider the following 116-residue polypeptide: Large ribosomal subunit protein bL17 (116 aa).

The protein belongs to the bacterial ribosomal protein bL17 family. In terms of assembly, part of the 50S ribosomal subunit. Contacts protein L32.

The protein is Large ribosomal subunit protein bL17 of Helicobacter pylori (strain G27).